A 371-amino-acid polypeptide reads, in one-letter code: MKLTVKTLKGSHFEIRVLPSDTIMAVKKNIEDSQGKDNYPCGQQLLIHNGKVLKDETSLVENKVTEEGFLVVMLSKSKSGGSAGQASVQTSSVSQPVSATTSSTKPAAPSTTQSSPVPASPIPAQEQPAAQTDTYGQAASTLVSGSSLEQMVQQIMEMGGGSWDKETVTRALRAAYNNPERAVDYLYSGIPQTAEVAVPVPEAQIAGSGAAPVAPASGGPNSSPLDLFPQETVAAAGSGDLGTLEFLRNNDQFQQLRTMVHSNPQILQPMLQELGKQNPQLLRLIQENQAEFLQLVNEPYEGSDGEGDMFDQPEQEMPHAINVTPAEQEAIQRLEAMGFDRALVIEAFLACDRNEELAANYLLENSGDFED.

The Ubiquitin-like domain occupies Met1 to Ser79. A compositionally biased stretch (low complexity) spans Ser79–Val117. The segment at Ser79–Leu142 is disordered. The segment covering Pro128–Leu142 has biased composition (polar residues). One can recognise a UBA 1 domain in the interval Ser146–Gly189. The 44-residue stretch at Gly242–Ile285 folds into the STI1 domain. One can recognise a UBA 2 domain in the interval Pro325 to Asn365.

It belongs to the RAD23 family. In terms of assembly, interacts with 'Lys-48'-linked polyubiquitin chains. Interacts with RPN10 via its ubiquitin-like domain. Interacts with UBQ1, UBQ2, UBQ5, UBQ7, UBQ10, UBQ11 and IAA16. Binds to RAD4. Widely expressed in the whole plant.

The protein localises to the nucleus. Its subcellular location is the cytoplasm. May be involved in nucleotide excision repair. Binds and presumably selects ubiquitin-conjugates for destruction. Prefers multiubiquitin chains rather than single ubiquitins, with a binding affinity for 'Lys-48'-linked ubiquitin chains. Acts as a ubiquitin receptor that associates with the 26S proteasomal docking subunit RPN10 for the indirect recognition of ubiquitinated substrates of ubiquitin/26S proteasome-mediated proteolysis (UPP). Involved in UV tolerance in both roots and hypocotyls, specifically in dark conditions. In Arabidopsis thaliana (Mouse-ear cress), this protein is Ubiquitin receptor RAD23b.